The chain runs to 1315 residues: Serine/threonine-protein kinase 36 (1315 aa).

The Protein kinase domain maps to 4–254 (YHVLEMIGEG…WPDLLYHPFI (251 aa)). Residues 10-18 (IGEGSFGRV) and lysine 33 each bind ATP. Aspartate 125 functions as the Proton acceptor in the catalytic mechanism. Disordered regions lie at residues 312-345 (EAMQ…PRLG) and 365-405 (SWAE…RSTD). Residues 379–397 (RENRTTPDCERAFPEERPE) are compositionally biased toward basic and acidic residues.

It belongs to the protein kinase superfamily. Ser/Thr protein kinase family. As to quaternary structure, interacts with SPAG16 and KIF27. Mg(2+) serves as cofactor.

It is found in the cytoplasm. The protein localises to the nucleus. The protein resides in the cytoskeleton. Its subcellular location is the cilium axoneme. The enzyme catalyses L-seryl-[protein] + ATP = O-phospho-L-seryl-[protein] + ADP + H(+). It catalyses the reaction L-threonyl-[protein] + ATP = O-phospho-L-threonyl-[protein] + ADP + H(+). In terms of biological role, serine/threonine protein kinase which plays an important role in the sonic hedgehog (Shh) pathway by regulating the activity of GLI transcription factors. Controls the activity of the transcriptional regulators GLI1, GLI2 and GLI3 by opposing the effect of SUFU and promoting their nuclear localization. GLI2 requires an additional function of STK36 to become transcriptionally active, but the enzyme does not need to possess an active kinase catalytic site for this to occur. Required for postnatal development, possibly by regulating the homeostasis of cerebral spinal fluid or ciliary function. Essential for construction of the central pair apparatus of motile cilia. This chain is Serine/threonine-protein kinase 36, found in Pongo abelii (Sumatran orangutan).